We begin with the raw amino-acid sequence, 54 residues long: uncharacterized protein (54 aa).

Residues 23–35 are compositionally biased toward basic and acidic residues; it reads DVMQEGETAKELN. Residues 23 to 54 are disordered; that stretch reads DVMQEGETAKELNYEGEDMQATSSAQNRQTSV. Residues 42 to 54 are compositionally biased toward polar residues; sequence QATSSAQNRQTSV.

This is an uncharacterized protein from Bacillus subtilis (strain 168).